The following is a 192-amino-acid chain: Small ribosomal subunit protein uS4B (192 aa).

Residues 83-145 (RRLDNLVYRL…SRKIQTYASN (63 aa)) form the S4 RNA-binding domain.

The protein belongs to the universal ribosomal protein uS4 family. As to quaternary structure, part of the 30S ribosomal subunit. Contacts protein S5. The interaction surface between S4 and S5 is involved in control of translational fidelity.

One of the primary rRNA binding proteins, it binds directly to 16S rRNA where it nucleates assembly of the body of the 30S subunit. Its function is as follows. With S5 and S12 plays an important role in translational accuracy. The protein is Small ribosomal subunit protein uS4B (rpsD2) of Clostridium acetobutylicum (strain ATCC 824 / DSM 792 / JCM 1419 / IAM 19013 / LMG 5710 / NBRC 13948 / NRRL B-527 / VKM B-1787 / 2291 / W).